The following is a 332-amino-acid chain: Diaminopimelate epimerase (332 aa).

Residues asparagine 13 and asparagine 73 each coordinate substrate. Residue cysteine 82 is the Proton donor of the active site. Residues 83-84 (GN), asparagine 172, asparagine 209, and 227-228 (ER) each bind substrate. Residue cysteine 236 is the Proton acceptor of the active site. 237–238 (GT) provides a ligand contact to substrate.

This sequence belongs to the diaminopimelate epimerase family. In terms of assembly, homodimer.

The protein resides in the cytoplasm. It catalyses the reaction (2S,6S)-2,6-diaminopimelate = meso-2,6-diaminopimelate. The protein operates within amino-acid biosynthesis; L-lysine biosynthesis via DAP pathway; DL-2,6-diaminopimelate from LL-2,6-diaminopimelate: step 1/1. Its function is as follows. Catalyzes the stereoinversion of LL-2,6-diaminopimelate (L,L-DAP) to meso-diaminopimelate (meso-DAP), a precursor of L-lysine and an essential component of the bacterial peptidoglycan. The protein is Diaminopimelate epimerase of Lactiplantibacillus plantarum (strain ATCC BAA-793 / NCIMB 8826 / WCFS1) (Lactobacillus plantarum).